The chain runs to 242 residues: ATP synthase subunit a (242 aa).

6 consecutive transmembrane segments (helical) span residues 29–49 (SSIY…LAFY), 84–104 (FIPL…LGMT), 114–134 (IIVT…VGFV), 140–160 (FLTL…MIVI), 189–209 (VIAG…IPLM), and 210–230 (VILI…FTIL).

The protein belongs to the ATPase A chain family. As to quaternary structure, F-type ATPases have 2 components, CF(1) - the catalytic core - and CF(0) - the membrane proton channel. CF(1) has five subunits: alpha(3), beta(3), gamma(1), delta(1), epsilon(1). CF(0) has three main subunits: a(1), b(2) and c(9-12). The alpha and beta chains form an alternating ring which encloses part of the gamma chain. CF(1) is attached to CF(0) by a central stalk formed by the gamma and epsilon chains, while a peripheral stalk is formed by the delta and b chains.

It localises to the cell inner membrane. In terms of biological role, key component of the proton channel; it plays a direct role in the translocation of protons across the membrane. In Rickettsia felis (strain ATCC VR-1525 / URRWXCal2) (Rickettsia azadi), this protein is ATP synthase subunit a.